The sequence spans 130 residues: UPF0102 protein RPE_0358 (130 aa).

Belongs to the UPF0102 family.

The chain is UPF0102 protein RPE_0358 from Rhodopseudomonas palustris (strain BisA53).